A 147-amino-acid chain; its full sequence is 3-hydroxyacyl-[acyl-carrier-protein] dehydratase FabZ (147 aa).

Residue His53 is part of the active site.

Belongs to the thioester dehydratase family. FabZ subfamily.

It localises to the cytoplasm. It carries out the reaction a (3R)-hydroxyacyl-[ACP] = a (2E)-enoyl-[ACP] + H2O. Involved in unsaturated fatty acids biosynthesis. Catalyzes the dehydration of short chain beta-hydroxyacyl-ACPs and long chain saturated and unsaturated beta-hydroxyacyl-ACPs. The chain is 3-hydroxyacyl-[acyl-carrier-protein] dehydratase FabZ from Synechococcus sp. (strain WH7803).